We begin with the raw amino-acid sequence, 1083 residues long: Chitin synthase 2 (1083 aa).

Composition is skewed to basic and acidic residues over residues 1–10 (MSSEREERTF) and 18–30 (DDVR…ENQE). Disordered regions lie at residues 1 to 248 (MSSE…IADD) and 260 to 294 (DDDV…TLNE). Asparagine 23 is a glycosylation site (N-linked (GlcNAc...) asparagine). 2 stretches are compositionally biased toward polar residues: residues 38–49 (SYASSMAESQTL) and 61–70 (AKLQNKNRTS). N-linked (GlcNAc...) asparagine glycosylation occurs at asparagine 67. Composition is skewed to basic and acidic residues over residues 78 to 100 (LPRD…KEQQ) and 117 to 128 (RLRDVNSHDKLP). 3 stretches are compositionally biased toward polar residues: residues 132-148 (SPRN…SRSG), 177-191 (RPWT…FTRS), and 282-292 (SYMSSESQDTL). Asparagine 417 carries an N-linked (GlcNAc...) asparagine glycan. Helical transmembrane passes span 708 to 728 (WLNG…QIWF), 747 to 767 (FIQL…FYFV), 785 to 805 (TVIF…QFIL), 820 to 840 (ISMI…FYII), 860 to 880 (NMIV…ILYL), 889 to 909 (SAQY…YAFC), 987 to 1007 (YLVL…SEIY), and 1020 to 1040 (FLLW…TTFA).

It belongs to the chitin synthase family. Class II subfamily.

It is found in the cell membrane. The enzyme catalyses [(1-&gt;4)-N-acetyl-beta-D-glucosaminyl](n) + UDP-N-acetyl-alpha-D-glucosamine = [(1-&gt;4)-N-acetyl-beta-D-glucosaminyl](n+1) + UDP + H(+). Its function is as follows. Polymerizes chitin, a structural polymer of the cell wall and septum, by transferring the sugar moiety of UDP-GlcNAc to the non-reducing end of the growing chitin polymer. Plays a critical role in cell wall integrity and virulence. The protein is Chitin synthase 2 of Fusarium oxysporum f. sp. lycopersici (strain 4287 / CBS 123668 / FGSC 9935 / NRRL 34936) (Fusarium vascular wilt of tomato).